Consider the following 396-residue polypeptide: Maltose/maltodextrin-binding periplasmic protein (396 aa).

The signal sequence occupies residues 1–26 (MKIKTGARILALSALTTMMFSASALA).

The protein belongs to the bacterial solute-binding protein 1 family. The complex is composed of two ATP-binding proteins (MalK), two transmembrane proteins (MalG and MalF) and a solute-binding protein (MalE).

The protein resides in the periplasm. Functionally, part of the ABC transporter complex MalEFGK involved in maltose/maltodextrin import. Binds maltose and higher maltodextrins. The sequence is that of Maltose/maltodextrin-binding periplasmic protein (malE) from Klebsiella aerogenes (Enterobacter aerogenes).